Here is an 854-residue protein sequence, read N- to C-terminus: DNA mismatch repair protein MutS (854 aa).

Residue 615 to 622 (GPNMGGKS) coordinates ATP.

This sequence belongs to the DNA mismatch repair MutS family.

In terms of biological role, this protein is involved in the repair of mismatches in DNA. It is possible that it carries out the mismatch recognition step. This protein has a weak ATPase activity. The chain is DNA mismatch repair protein MutS from Aliivibrio fischeri (strain ATCC 700601 / ES114) (Vibrio fischeri).